A 307-amino-acid polypeptide reads, in one-letter code: Ribosomal protein L11 methyltransferase (307 aa).

S-adenosyl-L-methionine contacts are provided by T144, G165, D187, and N235.

The protein belongs to the methyltransferase superfamily. PrmA family.

It is found in the cytoplasm. It catalyses the reaction L-lysyl-[protein] + 3 S-adenosyl-L-methionine = N(6),N(6),N(6)-trimethyl-L-lysyl-[protein] + 3 S-adenosyl-L-homocysteine + 3 H(+). Its function is as follows. Methylates ribosomal protein L11. In Psychrobacter sp. (strain PRwf-1), this protein is Ribosomal protein L11 methyltransferase.